The chain runs to 160 residues: Protein YpjC (160 aa).

The chain is Protein YpjC (ypjC) from Escherichia coli (strain K12).